The following is a 307-amino-acid chain: Upstream stimulatory factor 1 (307 aa).

2 disordered regions span residues D104–G131 and Q168–R207. A compositionally biased stretch (low complexity) spans P122–G131. The span at D187–R207 shows a compositional bias: basic and acidic residues. A bHLH domain is found at K196 to L251. Residues L268 to L289 are leucine-zipper.

In terms of assembly, efficient DNA binding requires dimerization with another bHLH protein. Binds DNA as a homodimer or a heterodimer. Oocyte and somatic tissue. Oocytic and somatic forms of this protein exist, probably as a result of post-translational modifications or minor splicing differences.

It localises to the nucleus. Its function is as follows. May act as a regulator of transcription factor IIIA (TFIIIA) gene expression. The protein is Upstream stimulatory factor 1 (usf1) of Xenopus borealis (Kenyan clawed frog).